Reading from the N-terminus, the 338-residue chain is Lipoyl synthase (338 aa).

The disordered stretch occupies residues 1 to 22 (MTTVQEAVPNLIPTQDVTPRPA). [4Fe-4S] cluster contacts are provided by Cys84, Cys89, Cys95, Cys110, Cys114, Cys117, and Ser324. The 218-residue stretch at 96-313 (FSGGTATFMI…AEEGYKMGFK (218 aa)) folds into the Radical SAM core domain.

Belongs to the radical SAM superfamily. Lipoyl synthase family. It depends on [4Fe-4S] cluster as a cofactor.

It is found in the cytoplasm. The enzyme catalyses [[Fe-S] cluster scaffold protein carrying a second [4Fe-4S](2+) cluster] + N(6)-octanoyl-L-lysyl-[protein] + 2 oxidized [2Fe-2S]-[ferredoxin] + 2 S-adenosyl-L-methionine + 4 H(+) = [[Fe-S] cluster scaffold protein] + N(6)-[(R)-dihydrolipoyl]-L-lysyl-[protein] + 4 Fe(3+) + 2 hydrogen sulfide + 2 5'-deoxyadenosine + 2 L-methionine + 2 reduced [2Fe-2S]-[ferredoxin]. It functions in the pathway protein modification; protein lipoylation via endogenous pathway; protein N(6)-(lipoyl)lysine from octanoyl-[acyl-carrier-protein]: step 2/2. Functionally, catalyzes the radical-mediated insertion of two sulfur atoms into the C-6 and C-8 positions of the octanoyl moiety bound to the lipoyl domains of lipoate-dependent enzymes, thereby converting the octanoylated domains into lipoylated derivatives. The sequence is that of Lipoyl synthase from Pseudomonas entomophila (strain L48).